A 486-amino-acid polypeptide reads, in one-letter code: Monocarboxylate transporter 12 (486 aa).

Residues 1-9 (MTKITRVGS) lie on the Cytoplasmic side of the membrane. 6 consecutive transmembrane segments (helical) span residues 10–30 (ASPP…LVTI), 58–78 (AWIH…GSVV), 86–106 (AGIM…SFAT), 115–135 (LGVL…AMVG), 148–168 (IAMS…QLLI), and 177–197 (LLIL…MRPI). Positions 201–220 (EDPSGPEKSHDRDAQREDCK) are enriched in basic and acidic residues. The tract at residues 201 to 221 (EDPSGPEKSHDRDAQREDCKQ) is disordered. 6 helical membrane passes run 253–273 (FVVL…LFVY), 289–309 (AFLM…FGWL), 320–340 (YVCY…LPML), 353–373 (FGYF…EIVG), 383–403 (VVYF…GWLV), and 410–430 (TAAF…LGFA). Residues 431–486 (KIAKRMKRTQVPFLVKDSDPKLHLWTNGSVAYSIAKELDQKDEESLAKARTGCNLT) are Cytoplasmic-facing.

Belongs to the major facilitator superfamily. Monocarboxylate porter (TC 2.A.1.13) family. Interacts with isoform 2 of BSG; this interaction is required for its localization to the plasma membrane. As to expression, detected in kidney, choroid plexus, testis, lung, stomach, large and small intestine, spleen, fat and parotid gland. In eye, expressed in cornea, ciliary epithelium, lens epithelium and lens fiber.

The protein localises to the cell membrane. The protein resides in the basolateral cell membrane. It catalyses the reaction creatine(in) = creatine(out). The catalysed reaction is guanidinoacetate(in) = guanidinoacetate(out). With respect to regulation, creatine uptake is inhibited by carbonyl cyanide 3-chlorophenylhydrazone (CCCP) and by valinomycin. Functionally, functions as a transporter for creatine and as well for its precursor guanidinoacetate. Transport of creatine and GAA is independent of resting membrane potential and extracellular Na(+), Cl(-), or pH. Contributes to the process of creatine biosynthesis and distribution. The polypeptide is Monocarboxylate transporter 12 (Rattus norvegicus (Rat)).